The chain runs to 474 residues: Glutamyl-tRNA(Gln) amidotransferase subunit A (474 aa).

Active-site charge relay system residues include Lys76 and Ser151. Ser175 functions as the Acyl-ester intermediate in the catalytic mechanism.

It belongs to the amidase family. GatA subfamily. Heterotrimer of A, B and C subunits.

It catalyses the reaction L-glutamyl-tRNA(Gln) + L-glutamine + ATP + H2O = L-glutaminyl-tRNA(Gln) + L-glutamate + ADP + phosphate + H(+). In terms of biological role, allows the formation of correctly charged Gln-tRNA(Gln) through the transamidation of misacylated Glu-tRNA(Gln) in organisms which lack glutaminyl-tRNA synthetase. The reaction takes place in the presence of glutamine and ATP through an activated gamma-phospho-Glu-tRNA(Gln). The protein is Glutamyl-tRNA(Gln) amidotransferase subunit A of Chlorobium limicola (strain DSM 245 / NBRC 103803 / 6330).